A 59-amino-acid polypeptide reads, in one-letter code: Cortexin domain-containing 1 protein (59 aa).

The chain crosses the membrane as a helical span at residues 17–37; that stretch reads LTLACFVFLCLFLVVMIIRCA.

The protein localises to the membrane. This is Cortexin domain-containing 1 protein from Homo sapiens (Human).